Here is a 434-residue protein sequence, read N- to C-terminus: KH domain-containing protein 3 (434 aa).

An involved in RNA binding region spans residues methionine 1–glutamate 39. A KH; atypical domain is found at aspartate 40–alanine 118. 2 positions are modified to phosphothreonine: threonine 267 and threonine 279. The interval valine 334–leucine 434 is required for interaction with NUMA1 and regulation of apoptosis in response to DNA damage.

Belongs to the KHDC1 family. In terms of assembly, component of the subcortical maternal complex (SCMC), at least composed of NLRP5, KHDC3, OOEP, and TLE6. Within the complex, interacts with NLRP5, KHDC3 and TLE6. The SCMC may facilitate translocation of its components between the nuclear and cytoplasmic compartments. Forms a scaffold complex with OOEP/FLOPED, and interacts with BLM and TRIM25 at DNA replication forks. Interacts with PARP1; the interaction is increased following the formation of DNA double-strand breaks. Interacts (via C-terminus) with NUMA1.

The protein resides in the cytoplasm. The protein localises to the cell cortex. It localises to the nucleus. Its subcellular location is the mitochondrion. It is found in the cytoskeleton. The protein resides in the microtubule organizing center. The protein localises to the centrosome. It localises to the chromosome. Functionally, component of the subcortical maternal complex (SCMC), a multiprotein complex that plays a key role in early embryonic development. The SCMC complex is a structural constituent of cytoplasmic lattices, which consist in fibrous structures found in the cytoplasm of oocytes and preimplantation embryos. They are required to store maternal proteins critical for embryonic development, such as proteins that control epigenetic reprogramming of the preimplantation embryo, and prevent their degradation or activation. KHDC3 ensures proper spindle assembly by regulating the localization of AURKA via RHOA signaling and of PLK1 via a RHOA-independent process. Required for the localization of MAD2L1 to kinetochores to enable spindle assembly checkpoint function. As part of the OOEP-KHDC3 scaffold, recruits BLM and TRIM25 to DNA replication forks, thereby promoting the ubiquitination of BLM by TRIM25, enhancing BLM retainment at replication forks and therefore promoting stalled replication fork restart. Regulates homologous recombination-mediated DNA repair via recruitment of RAD51 to sites of DNA double-strand breaks, and sustainment of PARP1 activity, which in turn modulates downstream ATM or ATR activation. Activation of ATM or ATR in response to DNA double-strand breaks may be cell-type specific. Its role in DNA double-strand break repair is independent of its role in restarting stalled replication forks. Promotes neural stem cell neurogenesis and neuronal differentiation in the hippocampus. May regulate normal development of learning, memory and anxiety. Capable of binding RNA. This chain is KH domain-containing protein 3, found in Rattus norvegicus (Rat).